The chain runs to 559 residues: uncharacterized protein (559 aa).

Residues 1-10 (MSGRRGDHPG) show a composition bias toward basic and acidic residues. The tract at residues 1–76 (MSGRRGDHPG…ERSRVPPRTT (76 aa)) is disordered. 11 helical membrane-spanning segments follow: residues 128 to 148 (FAVDSAMAVALANTLFFAAAS), 155 to 175 (VALYLLITIAPFAVIAPLIGP), 186 to 206 (VALALSFGLRTALAVVLIMNY), 208 to 228 (GATGSFPSWVLYPCALAMMVF), 259 to 279 (VFGLLGGTIAGGAIAAGVEFV), 283 to 303 (LFQLPGALFVVVAITIAGASL), 358 to 378 (LWGNCTIKVMVGFLFLYPAFV), 387 to 407 (WVQLGMLGLIGAAAAVGNFAG), 428 to 448 (VLVTVLAIAAAVAGSLAATAI), 490 to 510 (LAWVLGGAVGVLVYTELWVGF), and 515 to 535 (ALLILGLAQTIVSFRGDSLIP).

To M.leprae ML2143.

The protein resides in the cell membrane. This is an uncharacterized protein from Mycobacterium tuberculosis (strain CDC 1551 / Oshkosh).